A 475-amino-acid chain; its full sequence is F-box protein SKIP22 (475 aa).

The segment at 114-133 (DQAKSNPNTSVEDPEGDISG) is disordered. The 47-residue stretch at 319-365 (PPCLMRLPTELKLKILELLPGVSIGNMACVCTEMRYLASDNDLWKQK) folds into the F-box domain.

Part of a SCF (ASK-cullin-F-box) protein ligase complex. Interacts with SKP1A/ASK1 and SPK1B/ASK2.

It is found in the nucleus. It participates in protein modification; protein ubiquitination. In terms of biological role, component of SCF(ASK-cullin-F-box) E3 ubiquitin ligase complexes, which may mediate the ubiquitination and subsequent proteasomal degradation of target proteins. The chain is F-box protein SKIP22 (SKIP22) from Arabidopsis thaliana (Mouse-ear cress).